A 444-amino-acid chain; its full sequence is Acyl-CoA 6-desaturase (444 aa).

The segment at 1 to 21 (MGKGGNQGEGSTERQAPMPTF) is disordered. The Cytoplasmic portion of the chain corresponds to 1-130 (MGKGGNQGEG…EDMNLFKTNH (130 aa)). In terms of domain architecture, Cytochrome b5 heme-binding spans 18-95 (MPTFRWEEIQ…LKPLLIGELA (78 aa)). The chain crosses the membrane as a helical span at residues 131–151 (LFFFLLLSHIIVMESLAWFIL). A topological domain (lumenal) is located at residue Ser-152. Residues 153 to 173 (YFGTGWIPTLVTAFVLATSQA) form a helical membrane-spanning segment. Residues 174 to 264 (QAGWLQHDYG…KYLPYNHQHE (91 aa)) lie on the Cytoplasmic side of the membrane. The Histidine box-1 motif lies at 180 to 184 (HDYGH). The short motif at 217 to 221 (HFQHH) is the Histidine box-2 element. Residues 265–285 (YFFLIGPPLLIPMYFQYQIIM) form a helical membrane-spanning segment. The Lumenal segment spans residues 286 to 305 (TMISRRDWVDLAWAISYYMR). Residues 306-326 (FFYTYIPFYGILGALVFLNFI) form a helical membrane-spanning segment. Residues 327–444 (RFLESHWFVW…ELWLDAYLHK (118 aa)) are Cytoplasmic-facing. Residues 382–386 (QIEHH) carry the Histidine box-3 motif.

The protein belongs to the fatty acid desaturase type 1 family. Highly expressed in the adrenal gland, liver, brain, and testis, tissues where lipogenesis and steroidogenesis are active. Also detected in lung, heart, and skeletal muscle.

The protein localises to the endoplasmic reticulum membrane. The enzyme catalyses (9Z,12Z)-octadecadienoyl-CoA + 2 Fe(II)-[cytochrome b5] + O2 + 2 H(+) = (6Z,9Z,12Z)-octadecatrienoyl-CoA + 2 Fe(III)-[cytochrome b5] + 2 H2O. The catalysed reaction is (9Z,12Z,15Z)-octadecatrienoyl-CoA + 2 Fe(II)-[cytochrome b5] + O2 + 2 H(+) = (6Z,9Z,12Z,15Z)-octadecatetraenoyl-CoA + 2 Fe(III)-[cytochrome b5] + 2 H2O. It carries out the reaction (9Z,12Z,15Z,18Z,21Z)-tetracosapentaenoyl-CoA + 2 Fe(II)-[cytochrome b5] + O2 + 2 H(+) = (6Z,9Z,12Z,15Z,18Z,21Z)-tetracosahexaenoyl-CoA + 2 Fe(III)-[cytochrome b5] + 2 H2O. It catalyses the reaction (11E)-octadecenoyl-CoA + 2 Fe(II)-[cytochrome b5] + O2 + 2 H(+) = (6Z,11E)-octadecadienoyl-CoA + 2 Fe(III)-[cytochrome b5] + 2 H2O. The enzyme catalyses (11Z,14Z)-eicosadienoyl-CoA + 2 Fe(II)-[cytochrome b5] + O2 + 2 H(+) = (8Z,11Z,14Z)-eicosatrienoyl-CoA + 2 Fe(III)-[cytochrome b5] + 2 H2O. The catalysed reaction is (11Z,14Z,17Z)-eicosatrienoyl-CoA + 2 Fe(II)-[cytochrome b5] + O2 + 2 H(+) = (8Z,11Z,14Z,17Z)-eicosatetraenoyl-CoA + 2 Fe(III)-[cytochrome b5] + 2 H2O. Its pathway is lipid metabolism; polyunsaturated fatty acid biosynthesis. Functionally, involved in the biosynthesis of highly unsaturated fatty acids (HUFA) from the essential polyunsaturated fatty acids (PUFA) linoleic acid (LA) (18:2n-6) and alpha-linolenic acid (ALA) (18:3n-3) precursors, acting as a fatty acyl-coenzyme A (CoA) desaturase that introduces a cis double bond at carbon 6 of the fatty acyl chain. Catalyzes the first and rate limiting step in this pathway which is the desaturation of LA (18:2n-6) and ALA (18:3n-3) into gamma-linoleate (GLA) (18:3n-6) and stearidonate (18:4n-3), respectively. Subsequently, in the biosynthetic pathway of HUFA n-3 series, it desaturates tetracosapentaenoate (24:5n-3) to tetracosahexaenoate (24:6n-3), which is then converted to docosahexaenoate (DHA)(22:6n-3), an important lipid for nervous system function. It can also desaturate (11E)-octadecenoate (trans-vaccenoate) at carbon 6 generating (6Z,11E)-octadecadienoate. In addition to Delta-6 activity, this enzyme exhibits Delta-8 activity with slight biases toward n-3 fatty acyl-CoA substrates. This is Acyl-CoA 6-desaturase from Mus musculus (Mouse).